Reading from the N-terminus, the 569-residue chain is uncharacterized protein (569 aa).

A helical transmembrane segment spans residues 2–22 (VVIAALLGSLAVLAFLFYLWY).

The protein resides in the membrane. This is an uncharacterized protein from Mycoplasma pneumoniae (strain ATCC 29342 / M129 / Subtype 1) (Mycoplasmoides pneumoniae).